Consider the following 340-residue polypeptide: DNA-directed RNA polymerase subunit alpha (340 aa).

Residues 1–235 form an alpha N-terminal domain (alpha-NTD) region; it reads MYRNWTELIK…DQLNPFINFD (235 aa). Residues 251 to 340 are alpha C-terminal domain (alpha-CTD); sequence WNPNLFRKVD…LSKQFEEENF (90 aa).

This sequence belongs to the RNA polymerase alpha chain family. Homodimer. The RNAP catalytic core consists of 2 alpha, 1 beta, 1 beta' and 1 omega subunit. When a sigma factor is associated with the core the holoenzyme is formed, which can initiate transcription.

It catalyses the reaction RNA(n) + a ribonucleoside 5'-triphosphate = RNA(n+1) + diphosphate. Its function is as follows. DNA-dependent RNA polymerase catalyzes the transcription of DNA into RNA using the four ribonucleoside triphosphates as substrates. The sequence is that of DNA-directed RNA polymerase subunit alpha from Magnetococcus marinus (strain ATCC BAA-1437 / JCM 17883 / MC-1).